Consider the following 255-residue polypeptide: tRNA (guanine-N(1)-)-methyltransferase (255 aa).

S-adenosyl-L-methionine-binding positions include G113 and 133–138 (IGDYVL).

This sequence belongs to the RNA methyltransferase TrmD family. As to quaternary structure, homodimer.

The protein resides in the cytoplasm. The enzyme catalyses guanosine(37) in tRNA + S-adenosyl-L-methionine = N(1)-methylguanosine(37) in tRNA + S-adenosyl-L-homocysteine + H(+). Functionally, specifically methylates guanosine-37 in various tRNAs. The chain is tRNA (guanine-N(1)-)-methyltransferase from Enterobacter sp. (strain 638).